The primary structure comprises 249 residues: uncharacterized protein (249 aa).

A signal peptide spans Met1 to Gly25.

This sequence belongs to the periplasmic pilus chaperone family.

It is found in the periplasm. Functionally, could be required for the biogenesis of a putative fimbria. This is an uncharacterized protein from Escherichia coli (strain K12).